The primary structure comprises 212 residues: UDP-N-acetylglucosamine transferase subunit ALG13 (212 aa).

It belongs to the glycosyltransferase 28 family. In terms of assembly, heterodimer with ALG14 to form a functional enzyme.

It localises to the endoplasmic reticulum. It carries out the reaction an N-acetyl-alpha-D-glucosaminyl-diphospho-di-trans,poly-cis-dolichol + UDP-N-acetyl-alpha-D-glucosamine = an N,N'-diacetylchitobiosyl-diphospho-di-trans,poly-cis-dolichol + UDP + H(+). Its function is as follows. Involved in protein N-glycosylation. Essential for the second step of the dolichol-linked oligosaccharide pathway. This Debaryomyces hansenii (strain ATCC 36239 / CBS 767 / BCRC 21394 / JCM 1990 / NBRC 0083 / IGC 2968) (Yeast) protein is UDP-N-acetylglucosamine transferase subunit ALG13 (ALG13).